The following is a 509-amino-acid chain: Bestrophin-2a (509 aa).

Over Met1–Leu31 the chain is Cytoplasmic. Ala10 lines the Ca(2+) pocket. A helical transmembrane segment spans residues Leu32 to Arg51. Residues Phe52–Arg60 lie on the Extracellular side of the membrane. The chain crosses the membrane as a helical span at residues Tyr61 to Leu82. Over Gly83–Gln238 the chain is Cytoplasmic. The helical transmembrane segment at Val239 to Arg255 threads the bilayer. Residues Gln256–Pro274 lie on the Extracellular side of the membrane. Residues Ile275 to Leu288 form a helical membrane-spanning segment. Residues Lys289–Ala509 lie on the Cytoplasmic side of the membrane. Positions 293, 296, 301, and 304 each coordinate Ca(2+). Positions Asp454 to Ala509 are disordered. Pro residues-rich tracts occupy residues Leu457–Pro468 and Pro489–Pro498.

Belongs to the anion channel-forming bestrophin (TC 1.A.46) family. Calcium-sensitive chloride channel subfamily. Pentamer. Interacts with GLUL; this interaction tethers a fraction of GLUL to the membrane, causing a decrease of cytosolic glutamine synthase (GS) activity and inhibits the chloride channel activity of BEST2 by affecting the gating at the aperture in the absence of intracellular glutamate. In terms of tissue distribution, mainly confined to the retinal pigment epithelium. Expressed in colon.

It localises to the cell membrane. Its subcellular location is the basolateral cell membrane. The enzyme catalyses chloride(in) = chloride(out). The catalysed reaction is hydrogencarbonate(in) = hydrogencarbonate(out). It carries out the reaction L-glutamate(out) = L-glutamate(in). It catalyses the reaction iodide(out) = iodide(in). The enzyme catalyses L-glutamine(out) = L-glutamine(in). Its activity is regulated as follows. Chloride channel activity is allosterically inhibited by GLUL/glutamine synthase (GS) which affects the gating at the aperture in the absence of intracellular glutamate. Inhibitory effect of GLUL is relieved upon increasing of L-glutamate intracellular level. Its function is as follows. Ligand-gated anion channel that allows the movement of anions across cell membranes when activated by calcium (Ca2+). Transports a large specter of anions, namely mediates the movement of chloride, L-glutamate and iodide. Calcium-binding triggers the dilation of the aperture, but calcium-dependent gating is only effective when the size of the passing anion is bigger than the closed aperture. Mediates the calcium-activated hydrogencarbonate movement and participates in colonic hydrogencarbonate secretion concomitant with mucin secretion. In non-pigmented epithelium (NPE), mediates the efflux of intracellular L-glutamate; binding of intracellular L-glutamate activates and open both the neck and the aperture of the channel, leading to L-glutamate exit promoting chloride influx movement from the extracellular side in trans. Also exhibits a directional permeability for intracellular glutamine, in a similar manner as for L-glutamate. This is Bestrophin-2a from Homo sapiens (Human).